Reading from the N-terminus, the 195-residue chain is Pyridoxal 5'-phosphate synthase subunit PdxT (195 aa).

An L-glutamine-binding site is contributed by 46–48 (GES). Residue Cys-78 is the Nucleophile of the active site. Residues Arg-107 and 136–137 (IR) contribute to the L-glutamine site. Catalysis depends on charge relay system residues His-173 and Glu-175.

The protein belongs to the glutaminase PdxT/SNO family. In the presence of PdxS, forms a dodecamer of heterodimers. Only shows activity in the heterodimer.

The catalysed reaction is aldehydo-D-ribose 5-phosphate + D-glyceraldehyde 3-phosphate + L-glutamine = pyridoxal 5'-phosphate + L-glutamate + phosphate + 3 H2O + H(+). It carries out the reaction L-glutamine + H2O = L-glutamate + NH4(+). Its pathway is cofactor biosynthesis; pyridoxal 5'-phosphate biosynthesis. Catalyzes the hydrolysis of glutamine to glutamate and ammonia as part of the biosynthesis of pyridoxal 5'-phosphate. The resulting ammonia molecule is channeled to the active site of PdxS. This is Pyridoxal 5'-phosphate synthase subunit PdxT from Dehalococcoides mccartyi (strain ATCC BAA-2100 / JCM 16839 / KCTC 5957 / BAV1).